The following is a 170-amino-acid chain: Thialysine N-epsilon-acetyltransferase (170 aa).

The N-acetyltransferase domain occupies 4 to 166 (VLIREAKEGD…FRFEGEAMRE (163 aa)). Substrate is bound at residue 27-28 (YE). Position 29 is an N6-acetyllysine (lysine 29). Residue glutamate 92 participates in substrate binding. Acetyl-CoA-binding positions include 94–96 (IYV), 102–107 (GQGIGS), 133–135 (NKK), and tyrosine 140. Tyrosine 140 functions as the Proton donor in the catalytic mechanism. Glutamate 152 contacts substrate.

The protein belongs to the acetyltransferase family. In terms of assembly, homodimer.

It localises to the cytoplasm. It catalyses the reaction S-(2-aminoethyl)-L-cysteine + acetyl-CoA = S-(2-acetamidoethyl)-L-cysteine + CoA + H(+). The enzyme catalyses an alkane-alpha,omega-diamine + acetyl-CoA = an N-acetylalkane-alpha,omega-diamine + CoA + H(+). Functionally, catalyzes the N-acetylation of the amino acid thialysine (S-(2-aminoethyl)-L-cysteine), a L-lysine analog with the 4-methylene group substituted with a sulfur. May also catalyze acetylation of polyamines, such as norspermidine, spermidine or spermine. However, ability to acetylate polyamines is weak, suggesting that it does not act as a diamine acetyltransferase in vivo. The polypeptide is Thialysine N-epsilon-acetyltransferase (Sus scrofa (Pig)).